A 419-amino-acid polypeptide reads, in one-letter code: G-protein coupled receptor 151 (419 aa).

The Extracellular segment spans residues 1–41 (MLAAAFADSNSSSMNVSFAHLHFAGGYLPSDSQDWRTIIPA). 2 N-linked (GlcNAc...) asparagine glycosylation sites follow: Asn-10 and Asn-15. Residues 42–62 (LLVAVCLVGFVGNLCVIGILL) traverse the membrane as a helical segment. Over 63-71 (HNAWKGKPS) the chain is Cytoplasmic. A helical membrane pass occupies residues 72–92 (MIHSLILNLSLADLSLLLFSA). Residues 93-116 (PIRATAYSKSVWDLGWFVCKSSDW) are Extracellular-facing. Cys-111 and Cys-187 are joined by a disulfide. A helical membrane pass occupies residues 117 to 137 (FIHTCMAAKSLTIVVVAKVCF). Topologically, residues 138-153 (MYASDPAKQVSIHNYT) are cytoplasmic. The chain crosses the membrane as a helical span at residues 154–174 (IWSVLVAIWTVASLLPLPEWF). The Extracellular segment spans residues 175–201 (FSTIRHHEGVEMCLVDVPAVAEEFMSM). The helical transmembrane segment at 202–222 (FGKLYPLLAFGLPLFFASFYF) threads the bilayer. Residues 223-252 (WRAYDQCKKRGTKTQNLRNQIRSKQVTVML) lie on the Cytoplasmic side of the membrane. A helical membrane pass occupies residues 253–273 (LSIAIISALLWLPEWVAWLWV). Over 274–286 (WHLKAAGPAPPQG) the chain is Extracellular. The helical transmembrane segment at 287–307 (FIALSQVLMFSISSANPLIFL) threads the bilayer. Residues 308 to 419 (VMSEEFREGL…EDQETGEGVK (112 aa)) are Cytoplasmic-facing. The disordered stretch occupies residues 330 to 419 (PTVSESQETP…EDQETGEGVK (90 aa)). The segment covering 332-341 (VSESQETPAG) has biased composition (polar residues). Residues 410-419 (EDQETGEGVK) show a composition bias toward acidic residues.

Belongs to the G-protein coupled receptor 1 family. High expression in the spinal cord.

The protein resides in the cell membrane. Its function is as follows. Proton-sensing G-protein coupled receptor. The sequence is that of G-protein coupled receptor 151 (GPR151) from Homo sapiens (Human).